Consider the following 184-residue polypeptide: Translation initiation factor IF-3 (184 aa).

The protein belongs to the IF-3 family. As to quaternary structure, monomer.

It is found in the cytoplasm. In terms of biological role, IF-3 binds to the 30S ribosomal subunit and shifts the equilibrium between 70S ribosomes and their 50S and 30S subunits in favor of the free subunits, thus enhancing the availability of 30S subunits on which protein synthesis initiation begins. This chain is Translation initiation factor IF-3, found in Hamiltonella defensa subsp. Acyrthosiphon pisum (strain 5AT).